We begin with the raw amino-acid sequence, 56 residues long: Bacteriocin sublancin-168 (56 aa).

Positions 1 to 19 (MEKLFKEVKLEELENQKGS) are excised as a propeptide. Cystine bridges form between Cys26–Cys55 and Cys33–Cys48. Cys41 carries an S-linked (Glc) cysteine; by host glycan.

As to quaternary structure, monomer. Post-translationally, production of active sublancin-168 requires at least one thiol-disulfide oxidoreductase (BdbB or, in its absence, BdbC). Membrane translocation and cleavage of the precursor are probably performed by SunT.

It is found in the secreted. Its function is as follows. Bacteriocin active against Gram-positive bacteria. Inhibits B.cereus spore outgrowth, after the germination stage, approximately 1000-fold better than it inhibits exponential growth of the same cells. Inhibits B.subtilis strain ATCC 6633. The polypeptide is Bacteriocin sublancin-168 (sunA) (Bacillus pumilus (Bacillus mesentericus)).